Reading from the N-terminus, the 310-residue chain is MANVTAAMVKELREKTGTGMMDCKNALNETGGDIEAAVDWLRKKGLSKAAKKAGRVAAEGLIALDVEGTSGVLVEVNSETDFVARNEDFQFLVRNIARVAIQQGLTDVEALKGAHYPAGGVLGDAISEAVAKIGENMTLRRAALIHVPTGAIGSYMHNSVTEGLGKIGVLVGLATEGNAEAVQPLAREIALHIAAAAPLAIDASGLDPAVVEREKAVLAEKNAGKPANVLEKIVESGLKSFYKETCLLDQVSNYPEHAGKTIGQVLKDTEKAAGAPVTLVAFYRYALGEGIEKQESDFAAEVAAAASGQA.

An involved in Mg(2+) ion dislocation from EF-Tu region spans residues 80–83 (TDFV).

This sequence belongs to the EF-Ts family.

Its subcellular location is the cytoplasm. Its function is as follows. Associates with the EF-Tu.GDP complex and induces the exchange of GDP to GTP. It remains bound to the aminoacyl-tRNA.EF-Tu.GTP complex up to the GTP hydrolysis stage on the ribosome. The sequence is that of Elongation factor Ts from Beijerinckia indica subsp. indica (strain ATCC 9039 / DSM 1715 / NCIMB 8712).